Here is a 703-residue protein sequence, read N- to C-terminus: Zinc finger protein 750 (703 aa).

The segment at 25–51 (YKCFQCPFTCNEKSHLFNHMKYGLCKN) adopts a CCHC-type zinc-finger fold. Zn(2+) is bound by residues Cys27, Cys30, His43, and Cys49. Disordered regions lie at residues 64–113 (KCPK…DAKE), 350–527 (PASS…YGPM), 553–614 (WAPR…KQTA), and 630–703 (RVAD…TRVS). Positions 67-106 (KSSSLDPKQTHQPEPTSKPATSKSLLNGLSSFDPKSQQGS) are enriched in polar residues. Residues 352 to 361 (SSPSELNLSS) are compositionally biased toward low complexity. The span at 367–394 (TECEKGSPVPEAKDPSKDGQRDAEEAKM) shows a compositional bias: basic and acidic residues. Polar residues-rich tracts occupy residues 410–421 (SPTNFTQTSQTF) and 456–477 (GSES…SLQA). Positions 574 to 611 (TETKGSEDRTSRVETPQDKAHSRTTPDVHTEDSSDEQK) are enriched in basic and acidic residues. The segment covering 639–655 (QEPTRQDVPTLSATENL) has biased composition (polar residues).

Its subcellular location is the nucleus. Transcription factor involved in epidermis differentiation. Required for terminal epidermal differentiation: acts downstream of p63/TP63 and activates expression of late epidermal differentiation genes. Specifically binds to the promoter of KLF4 and promotes its expression. This Mus musculus (Mouse) protein is Zinc finger protein 750 (Znf750).